A 341-amino-acid polypeptide reads, in one-letter code: MKAKDFDYYLPEELIAQHPLEKRDECRLMVLDKETGHVEHKVFKDILDYLNKGDCLVLNDTRVMPARLIGEKEETKGKMEFLLLKRTDKDTWETLVKPGKRAKIGSRFIFGQGELKAEVIGMAEEGSRIVKFEYDGIFEEVLDRLGQMPLPPYITEKLEDKEKYQTVYSKESGSAAAPTAGLHFTEELLNKIKEKGIKIVFLTLHVGLGTFRPVKEGEIENHIMHSEYYCISKETADIINTTKEAGGRVIAVGTTSCRTLETLGSKHGKIIEDSGWTNIFMYPGYEFKVTDALITNFHLPQSTLIMLVSALSERERVLNAYEIAVREKYRFFSFGDAMFVK.

This sequence belongs to the QueA family. As to quaternary structure, monomer.

It localises to the cytoplasm. The catalysed reaction is 7-aminomethyl-7-carbaguanosine(34) in tRNA + S-adenosyl-L-methionine = epoxyqueuosine(34) in tRNA + adenine + L-methionine + 2 H(+). It participates in tRNA modification; tRNA-queuosine biosynthesis. Functionally, transfers and isomerizes the ribose moiety from AdoMet to the 7-aminomethyl group of 7-deazaguanine (preQ1-tRNA) to give epoxyqueuosine (oQ-tRNA). The polypeptide is S-adenosylmethionine:tRNA ribosyltransferase-isomerase (Clostridium tetani (strain Massachusetts / E88)).